Consider the following 510-residue polypeptide: MEIRADEISRIIREQIKDYGKKVEVAETGSILSQADGVARIYGLAGAAAGELLEFPGGIRGLVLNLEEDNVGAAIMGPYEHIREGDPVKRTGLIAEVPVGEELLGRVVDGLGNPIDGRGPLNAKHQRKIEIKAPGIVKRKSVHEPMQTGLKAIDALVPIGRGQRELILGDRQTGKTAVAIDTILNNKGNNLYCFYVAIGQKQSTVARVVDTLKKHGAMEYTTVISASASDPAPMQYLAPYTGVTMAEYFRDSGRHALIIYDDLSKQAVAYRQLSLLLRRPPGREAYPGDVFYLHSRLLERAAKLSDKEGAGSLTALPIIETQAGDVSAYIPTNVISITDGQIFLESNLFFQGVRPAINVGISVSRVGGSAQIKAMKQVAGSLKLDLAQYRELAAFAQFGSDLDKATQETLARGERLVELLKQGQYAPLSVEKQVIQIYAGTQKDAGGHNWIRSVPTEQVVRYMAELLEFLDARHPGIAKAIAEKKALDDGIRKDLDAALTEFAGIFKIEG.

169 to 176 (GDRQTGKT) provides a ligand contact to ATP.

The protein belongs to the ATPase alpha/beta chains family. F-type ATPases have 2 components, CF(1) - the catalytic core - and CF(0) - the membrane proton channel. CF(1) has five subunits: alpha(3), beta(3), gamma(1), delta(1), epsilon(1). CF(0) has three main subunits: a(1), b(2) and c(9-12). The alpha and beta chains form an alternating ring which encloses part of the gamma chain. CF(1) is attached to CF(0) by a central stalk formed by the gamma and epsilon chains, while a peripheral stalk is formed by the delta and b chains.

It is found in the cell inner membrane. It carries out the reaction ATP + H2O + 4 H(+)(in) = ADP + phosphate + 5 H(+)(out). Functionally, produces ATP from ADP in the presence of a proton gradient across the membrane. The alpha chain is a regulatory subunit. The polypeptide is ATP synthase subunit alpha (Anaeromyxobacter dehalogenans (strain 2CP-C)).